Reading from the N-terminus, the 69-residue chain is Amphipathic peptide CT2 (69 aa).

Positions Met1–Ala23 are cleaved as a signal peptide. Phe36 is modified (phenylalanine amide). The propeptide occupies Gly40 to Arg69.

It belongs to the non-disulfide-bridged peptide (NDBP) superfamily. Short antimicrobial peptide (group 4) family. As to expression, expressed by the venom gland.

Its subcellular location is the secreted. It is found in the target cell membrane. Functionally, amphipathic peptide that shows antibacterial activities against both Gram-positive (MIC=10 uM, 20 uM and 20 uM against S.aureus, B.subtilis and S.agalactiae, respectively) and Gram-negative bacteria (MIC=20 uM, 10 uM, and 10 uM against E.coli, S.typhi, and P.aeruginosa, respectively). Is mildly hemolytic at its MIC range, but shows a strong cytotoxic activity at higher concentrations, reaching 84% lysis at 50 uM. This is Amphipathic peptide CT2 from Vaejovis mexicanus smithi (Mexican scorpion).